A 385-amino-acid chain; its full sequence is tRNA pseudouridine synthase D (385 aa).

The active-site Nucleophile is the D86. The 141-residue stretch at 165–305 (GFPNYFGNQR…TRFLQKDIAP (141 aa)) folds into the TRUD domain.

The protein belongs to the pseudouridine synthase TruD family.

The enzyme catalyses uridine(13) in tRNA = pseudouridine(13) in tRNA. Its function is as follows. Responsible for synthesis of pseudouridine from uracil-13 in transfer RNAs. The polypeptide is tRNA pseudouridine synthase D (Helicobacter hepaticus (strain ATCC 51449 / 3B1)).